We begin with the raw amino-acid sequence, 400 residues long: Elongation factor Tu (400 aa).

The tr-type G domain maps to 10–209 (KPHVNVGTIG…AVDSYIPTPE (200 aa)). The G1 stretch occupies residues 19-26 (GHVDHGKT). 19–26 (GHVDHGKT) contributes to the GTP binding site. Thr26 is a Mg(2+) binding site. Residues 60 to 64 (GITIA) form a G2 region. Residues 81 to 84 (DCPG) are G3. Residues 81–85 (DCPGH) and 136–139 (NKVD) contribute to the GTP site. Residues 136 to 139 (NKVD) are G4. Residues 174–176 (SAL) form a G5 region.

It belongs to the TRAFAC class translation factor GTPase superfamily. Classic translation factor GTPase family. EF-Tu/EF-1A subfamily. As to quaternary structure, monomer.

Its subcellular location is the cytoplasm. The catalysed reaction is GTP + H2O = GDP + phosphate + H(+). Its function is as follows. GTP hydrolase that promotes the GTP-dependent binding of aminoacyl-tRNA to the A-site of ribosomes during protein biosynthesis. In Moorella thermoacetica (strain ATCC 39073 / JCM 9320), this protein is Elongation factor Tu.